Reading from the N-terminus, the 523-residue chain is Putative F-box protein At1g30925 (523 aa).

The F-box domain maps to 4–44 (FPNDDLVYEILLRLPAKSVARCSCVSKLRRSILSRQDFTEL).

The protein is Putative F-box protein At1g30925 of Arabidopsis thaliana (Mouse-ear cress).